The chain runs to 369 residues: N-succinylamino acid racemase (369 aa).

Catalysis depends on Lys-163, which acts as the Proton donor. 3 residues coordinate Mg(2+): Asp-188, Glu-213, and Asp-238. Lys-262 functions as the Proton acceptor in the catalytic mechanism.

This sequence belongs to the mandelate racemase/muconate lactonizing enzyme family. MenC type 2 subfamily. As to quaternary structure, homooctamer. Tetramer of dimers. It depends on a divalent metal cation as a cofactor.

It catalyses the reaction (1R,6R)-6-hydroxy-2-succinyl-cyclohexa-2,4-diene-1-carboxylate = 2-succinylbenzoate + H2O. In terms of biological role, acts as a N-succinylamino acid racemase (NSAR) that catalyzes the racemization of N-succinyl-L-phenylglycine. Also converts 2-succinyl-6-hydroxy-2,4-cyclohexadiene-1-carboxylate (SHCHC) to 2-succinylbenzoate (OSB). Catalyzes both N-succinylamino acid racemization and OSB synthesis at equivalent rates. However, NSAR activity is probably the protein's biological function, because menaquinone biosynthesis genes are missing in this species. In Thermus thermophilus (strain ATCC 27634 / DSM 579 / HB8), this protein is N-succinylamino acid racemase.